The chain runs to 414 residues: Tyrosine--tRNA ligase (414 aa).

Residue Tyr-38 participates in L-tyrosine binding. The 'HIGH' region signature appears at 43–52; the sequence is PTATSLHLGN. 2 residues coordinate L-tyrosine: Tyr-165 and Gln-169. Residues 228 to 232 carry the 'KMSKS' region motif; it reads KFGKS. Lys-231 contributes to the ATP binding site. Residues 349 to 414 enclose the S4 RNA-binding domain; sequence FNANQIIDLG…KKYFFMIELI (66 aa).

This sequence belongs to the class-I aminoacyl-tRNA synthetase family. TyrS type 1 subfamily. In terms of assembly, homodimer.

It localises to the cytoplasm. It carries out the reaction tRNA(Tyr) + L-tyrosine + ATP = L-tyrosyl-tRNA(Tyr) + AMP + diphosphate + H(+). Its function is as follows. Catalyzes the attachment of tyrosine to tRNA(Tyr) in a two-step reaction: tyrosine is first activated by ATP to form Tyr-AMP and then transferred to the acceptor end of tRNA(Tyr). In Mesomycoplasma hyopneumoniae (strain 7448) (Mycoplasma hyopneumoniae), this protein is Tyrosine--tRNA ligase.